The sequence spans 133 residues: Fatty acid-binding protein (133 aa).

It belongs to the calycin superfamily. Fatty-acid binding protein (FABP) family.

The sequence is that of Fatty acid-binding protein from Clonorchis sinensis (Chinese liver fluke).